Reading from the N-terminus, the 133-residue chain is DNA-directed RNA polymerases I, II, and III subunit rpabc2 (133 aa).

The span at methionine 1 to threonine 32 shows a compositional bias: acidic residues. Residues methionine 1 to proline 55 form a disordered region.

Belongs to the archaeal Rpo6/eukaryotic RPB6 RNA polymerase subunit family. Component of the RNA polymerase I (Pol I), RNA polymerase II (Pol II) and RNA polymerase III (Pol III) complexes consisting of at least 13, 12 and 17 subunits, respectively.

It localises to the nucleus. In terms of biological role, DNA-dependent RNA polymerases catalyze the transcription of DNA into RNA using the four ribonucleoside triphosphates as substrates. Common component of RNA polymerases I, II and III which synthesize ribosomal RNA precursors, mRNA precursors and many functional non-coding RNAs, and small RNAs, such as 5S rRNA and tRNAs, respectively. Pol II is the central component of the basal RNA polymerase II transcription machinery. Pols are composed of mobile elements that move relative to each other. In Pol II, RPB6 is part of the clamp element and together with parts of RPB1 and RPB2 forms a pocket to which the RPB4-RPB7 subcomplex binds. This chain is DNA-directed RNA polymerases I, II, and III subunit rpabc2 (polr2f), found in Dictyostelium discoideum (Social amoeba).